A 642-amino-acid chain; its full sequence is Acid beta-fructofuranosidase (642 aa).

Residues 1 to 22 are Cytoplasmic-facing; sequence MRNDSPYTPLLNASHNNHRRRE. Residues 1–95 constitute a propeptide, removed in mature form; that stretch reads MRNDSPYTPL…LSGNLVGEGG (95 aa). Residues 23–43 form a helical; Signal-anchor for type II membrane protein membrane-spanning segment; that stretch reads LLLLFSGLLLLASIIAFSAYI. Residues 44 to 642 are Lumenal-facing; that stretch reads AQPHADADVS…YHPDQKRQTS (599 aa). Residue Asn100 is glycosylated (N-linked (GlcNAc...) asparagine). Substrate-binding positions include 119–122, Gln138, Trp146, 181–182, and 245–246; these read WMND, WT, and RD. The active site involves Asp122. The N-linked (GlcNAc...) asparagine glycan is linked to Asn267. The substrate site is built by Glu300 and Asp333. A disulfide bridge links Cys490 with Cys538. N-linked (GlcNAc...) asparagine glycans are attached at residues Asn491 and Asn615.

This sequence belongs to the glycosyl hydrolase 32 family. In terms of assembly, may be present in two forms, a 70 kDa monomer and a heterodimer of the 30 kDa and 38 kDa subunits. The ratio of the levels of the two forms within cells appears to be regulated developmentally.

The protein resides in the membrane. It is found in the vacuole. It localises to the vacuole lumen. It carries out the reaction Hydrolysis of terminal non-reducing beta-D-fructofuranoside residues in beta-D-fructofuranosides.. It functions in the pathway glycan biosynthesis; sucrose metabolism. This is Acid beta-fructofuranosidase (VCINV) from Vicia faba (Broad bean).